The chain runs to 92 residues: SPbeta prophage-derived DNA-binding protein HU 2 (92 aa).

The residue at position 4 (Thr4) is a Phosphothreonine. The interval 55–77 (RAARKGRNPQTGEEIDIPATKAP) is disordered.

Belongs to the bacterial histone-like protein family. Homodimer.

In terms of biological role, histone-like DNA-binding protein which is capable of wrapping DNA to stabilize it, and thus to prevent its denaturation under extreme environmental conditions. The sequence is that of SPbeta prophage-derived DNA-binding protein HU 2 (hup2) from Bacillus subtilis (strain 168).